The sequence spans 373 residues: DNA replication and repair protein RecF (373 aa).

30–37 (GENAQGKT) is a binding site for ATP.

This sequence belongs to the RecF family.

The protein resides in the cytoplasm. In terms of biological role, the RecF protein is involved in DNA metabolism; it is required for DNA replication and normal SOS inducibility. RecF binds preferentially to single-stranded, linear DNA. It also seems to bind ATP. This is DNA replication and repair protein RecF from Bacillus cytotoxicus (strain DSM 22905 / CIP 110041 / 391-98 / NVH 391-98).